The sequence spans 65 residues: Large ribosomal subunit protein uL29 (65 aa).

Belongs to the universal ribosomal protein uL29 family.

The sequence is that of Large ribosomal subunit protein uL29 from Lactobacillus johnsonii (strain CNCM I-12250 / La1 / NCC 533).